A 512-amino-acid polypeptide reads, in one-letter code: 2-isopropylmalate synthase (512 aa).

The Pyruvate carboxyltransferase domain maps to 5–267 (VVIFDTTLRD…ETSINKSEIY (263 aa)). 4 residues coordinate Mn(2+): aspartate 14, histidine 202, histidine 204, and asparagine 238. Positions 391 to 512 (SLEYLHITSG…LPKAKTERAV (122 aa)) are regulatory domain.

This sequence belongs to the alpha-IPM synthase/homocitrate synthase family. LeuA type 1 subfamily. As to quaternary structure, homodimer. Requires Mn(2+) as cofactor.

The protein localises to the cytoplasm. It carries out the reaction 3-methyl-2-oxobutanoate + acetyl-CoA + H2O = (2S)-2-isopropylmalate + CoA + H(+). Its pathway is amino-acid biosynthesis; L-leucine biosynthesis; L-leucine from 3-methyl-2-oxobutanoate: step 1/4. Catalyzes the condensation of the acetyl group of acetyl-CoA with 3-methyl-2-oxobutanoate (2-ketoisovalerate) to form 3-carboxy-3-hydroxy-4-methylpentanoate (2-isopropylmalate). This is 2-isopropylmalate synthase from Heliobacterium modesticaldum (strain ATCC 51547 / Ice1).